The following is a 404-amino-acid chain: S-adenosylmethionine synthase (404 aa).

The span at 1–13 shows a compositional bias: polar residues; that stretch reads MSQSRYFFTSESV. Residues 1–20 form a disordered region; the sequence is MSQSRYFFTSESVSEGHPDK. His17 serves as a coordination point for ATP. Asp19 contacts Mg(2+). Residue Glu45 participates in K(+) binding. Positions 58 and 101 each coordinate L-methionine. Residues 101–111 are flexible loop; sequence QSPDINRGVDR. Residues 172 to 174, 245 to 246, Asp254, 260 to 261, Ala277, and Lys281 contribute to the ATP site; these read DAK, RF, and RK. Asp254 lines the L-methionine pocket. Lys285 lines the L-methionine pocket.

This sequence belongs to the AdoMet synthase family. In terms of assembly, homotetramer; dimer of dimers. Requires Mg(2+) as cofactor. It depends on K(+) as a cofactor.

The protein localises to the cytoplasm. It carries out the reaction L-methionine + ATP + H2O = S-adenosyl-L-methionine + phosphate + diphosphate. It functions in the pathway amino-acid biosynthesis; S-adenosyl-L-methionine biosynthesis; S-adenosyl-L-methionine from L-methionine: step 1/1. Functionally, catalyzes the formation of S-adenosylmethionine (AdoMet) from methionine and ATP. The overall synthetic reaction is composed of two sequential steps, AdoMet formation and the subsequent tripolyphosphate hydrolysis which occurs prior to release of AdoMet from the enzyme. The polypeptide is S-adenosylmethionine synthase (Chlorobium limicola (strain DSM 245 / NBRC 103803 / 6330)).